Here is a 393-residue protein sequence, read N- to C-terminus: CCA-adding enzyme (393 aa).

ATP is bound by residues glycine 27 and arginine 30. CTP is bound by residues glycine 27 and arginine 30. Residues aspartate 40 and aspartate 42 each contribute to the Mg(2+) site. Positions 111, 154, 157, 160, and 163 each coordinate ATP. 5 residues coordinate CTP: arginine 111, aspartate 154, arginine 157, arginine 160, and arginine 163.

The protein belongs to the tRNA nucleotidyltransferase/poly(A) polymerase family. Bacterial CCA-adding enzyme type 3 subfamily. As to quaternary structure, homodimer. Mg(2+) serves as cofactor.

The catalysed reaction is a tRNA precursor + 2 CTP + ATP = a tRNA with a 3' CCA end + 3 diphosphate. The enzyme catalyses a tRNA with a 3' CCA end + 2 CTP + ATP = a tRNA with a 3' CCACCA end + 3 diphosphate. In terms of biological role, catalyzes the addition and repair of the essential 3'-terminal CCA sequence in tRNAs without using a nucleic acid template. Adds these three nucleotides in the order of C, C, and A to the tRNA nucleotide-73, using CTP and ATP as substrates and producing inorganic pyrophosphate. tRNA 3'-terminal CCA addition is required both for tRNA processing and repair. Also involved in tRNA surveillance by mediating tandem CCA addition to generate a CCACCA at the 3' terminus of unstable tRNAs. While stable tRNAs receive only 3'-terminal CCA, unstable tRNAs are marked with CCACCA and rapidly degraded. The protein is CCA-adding enzyme of Listeria monocytogenes serotype 4b (strain CLIP80459).